The sequence spans 216 residues: Adenylate kinase (216 aa).

10-15 (GAGKGT) provides a ligand contact to ATP. The interval 30 to 59 (STGDIFRKNISENTPLGIEAKGYIDNGQLV) is NMP. AMP-binding positions include Thr31, Arg36, 57–59 (QLV), 85–88 (GFPR), and Gln92. The LID stretch occupies residues 126-163 (GRRVCPSCGASYHVKFNPPTNEGKCDLCGSEVIQRKDD). Position 127 (Arg127) interacts with ATP. Cys130 and Cys133 together coordinate Zn(2+). 136–137 (SY) contributes to the ATP binding site. Residues Cys150 and Cys153 each contribute to the Zn(2+) site. AMP contacts are provided by Arg160 and Arg171. Lys199 contacts ATP.

The protein belongs to the adenylate kinase family. Monomer.

The protein localises to the cytoplasm. It carries out the reaction AMP + ATP = 2 ADP. It functions in the pathway purine metabolism; AMP biosynthesis via salvage pathway; AMP from ADP: step 1/1. Its function is as follows. Catalyzes the reversible transfer of the terminal phosphate group between ATP and AMP. Plays an important role in cellular energy homeostasis and in adenine nucleotide metabolism. This is Adenylate kinase from Clostridium beijerinckii (strain ATCC 51743 / NCIMB 8052) (Clostridium acetobutylicum).